A 632-amino-acid chain; its full sequence is Probable membrane transporter protein MamO (632 aa).

The chain crosses the membrane as a helical span at residues 25–45 (APVSILAFLILVTFAWGAYLL). Residues 78–268 (LYYTVPPAVV…VIVSHLQDVV (191 aa)) form a protease-like region. Residues His-148 and His-263 each coordinate a divalent metal cation. 7 helical membrane-spanning segments follow: residues 340–360 (IGGY…AAGV), 412–432 (LVQW…VVIG), 434–454 (FIGN…FALI), 513–533 (AVLG…GGVI), 550–570 (IANS…VAFI), 582–602 (APVT…ILGA), and 612–632 (VLKG…LTTV). Residues 365–632 (MTMGGGVLQV…AIAIKMLTTV (268 aa)) are TSUP-like.

It in the N-terminal section; belongs to the peptidase S1C family. The protein in the C-terminal section; belongs to the 4-toluene sulfonate uptake permease (TSUP) (TC 2.A.102) family. A metal cation serves as cofactor. In terms of processing, subject to proteolytic cleavage by MamE.

The protein resides in the magnetosome membrane. In terms of biological role, plays 2 roles; promotes magnetite nucleation/formation and activates the MamE protease. Despite its near conservation of a protease-like sequence, this is probably not a protease. Required in conjunction with MamP for proteolysis of at least MamE, itself and MamP. May transport a solute that controls MamE's protease activity. May place individual iron atoms into the magnetite lattice. One of 7 genes (mamLQBIEMO) able to induce magnetosome membrane biogenesis; coexpression of mamLQRBIEMO in a deletion of the 17 gene mamAB operon restores magnetosome vesicle formation but not magnetite biosynthesis. In Magnetospirillum gryphiswaldense (strain DSM 6361 / JCM 21280 / NBRC 15271 / MSR-1), this protein is Probable membrane transporter protein MamO.